A 204-amino-acid chain; its full sequence is Transmembrane protein 186 (204 aa).

Over 1–69 the chain is Mitochondrial matrix; it reads MLELLCRVSP…RLVAALSRLK (69 aa). A helical membrane pass occupies residues 70 to 90; sequence VYQAVITAAGTPIVFALGSAG. The Mitochondrial intermembrane segment spans residues 91-95; the sequence is QLSTD. A helical membrane pass occupies residues 96–116; it reads ALAIYAAIGVTGLITLTLASY. Topologically, residues 117 to 204 are mitochondrial matrix; that stretch reads ASSNLVGFIY…RQLFEGLFGN (88 aa).

This sequence belongs to the TMEM186 family. In terms of assembly, associates with mitochondrial complex I assembly intermediates during its biogenesis.

Its subcellular location is the mitochondrion inner membrane. As part of the MCIA complex, required for efficient assembly of the mitochondrial complex I. This Drosophila melanogaster (Fruit fly) protein is Transmembrane protein 186.